The sequence spans 1875 residues: Soluble starch synthase 3a, chloroplastic/amyloplastic (1875 aa).

A chloroplast-targeting transit peptide spans 1-49; sequence MEMALRPQSLLCPRSRLKVVIRPASSASGGGLAQYFLMTRRYTGSRIVR. The stretch at 1007–1065 forms a coiled coil; the sequence is KRELERVATEEAERRRHAEEQQRMGEQRAAEQAAREQAKKEIELKKNKLQNLLSSARTH. Positions 1014-1043 are disordered; the sequence is ATEEAERRRHAEEQQRMGEQRAAEQAAREQ.

Belongs to the glycosyltransferase 1 family. Bacterial/plant glycogen synthase subfamily. In terms of tissue distribution, expressed in the endosperm.

It is found in the plastid. The protein resides in the chloroplast. The protein localises to the amyloplast. The catalysed reaction is [(1-&gt;4)-alpha-D-glucosyl](n) + ADP-alpha-D-glucose = [(1-&gt;4)-alpha-D-glucosyl](n+1) + ADP + H(+). It functions in the pathway glycan biosynthesis; starch biosynthesis. In terms of biological role, involved in starch synthesis in endosperm amyloplasts. Plays an important role in the elongation of amylopectin B chains. This chain is Soluble starch synthase 3a, chloroplastic/amyloplastic, found in Oryza sativa subsp. japonica (Rice).